The primary structure comprises 248 residues: PF03932 family protein CutC (248 aa).

Belongs to the CutC family. As to quaternary structure, homodimer.

The protein resides in the cytoplasm. The chain is PF03932 family protein CutC from Escherichia coli O127:H6 (strain E2348/69 / EPEC).